The primary structure comprises 107 residues: RecQ-mediated genome instability protein 2 homolog (107 aa).

Belongs to the RMI2 family. As to quaternary structure, component of the RMI complex, containing at least top-3, rmh-1 and rmh-2. Component of the BTR double Holliday Junction dissolution complex composed of at least him-6, top-3, rmh-1 and rmif-2, which is involved in double strand break repair in the germline. Interacts with rmh-1; the interaction is direct and is required for mutual stability and localization at nuclear foci. As to expression, expressed in the germline.

It localises to the nucleus. Functionally, essential component of the RMI complex, a complex that plays an important role in the processing of homologous recombination intermediates. Component of the BTR double Holliday Junction dissolution complex, which is involved in homologous recombination during meiotic double strand break in the germline. Plays a role in double strand break repair by positively regulating the accumulation of rad-51 at double strand breaks. Stabilizes and positively regulates the localization of the BTR double Holliday Junction dissolution complex components rmh-1, him-6 and top-3 at nuclear foci during meiotic recombination. Positively regulates meiotic recombination, chiasma formation, and chromosome segregation in meiosis. Positively regulates DNA crossover formation and positioning on chromosome arms (away from the chromosome center) during homologous recombination. This chain is RecQ-mediated genome instability protein 2 homolog, found in Caenorhabditis elegans.